Reading from the N-terminus, the 115-residue chain is Non-specific lipid-transfer protein 3 (115 aa).

An N-terminal signal peptide occupies residues 1-23; it reads MAFALRFFTCLVLTVCIVASVDA. Cystine bridges form between Cys-27–Cys-74, Cys-37–Cys-51, Cys-52–Cys-97, and Cys-72–Cys-111.

It belongs to the plant LTP family.

In terms of biological role, plant non-specific lipid-transfer proteins transfer phospholipids as well as galactolipids across membranes. May play a role in wax or cutin deposition in the cell walls of expanding epidermal cells and certain secretory tissues. The sequence is that of Non-specific lipid-transfer protein 3 (LTP3) from Arabidopsis thaliana (Mouse-ear cress).